Here is a 282-residue protein sequence, read N- to C-terminus: Large ribosomal subunit protein uL4c (282 aa).

The transit peptide at 1–49 (MASSATAPNSLSFFSSSLFLSSSHQIPKTYISVSKLGSGRVSKPLSVSS) directs the protein to the chloroplast. Residues 106 to 138 (EVRGGGIKPYSQKKTGHARRGSQRTPLRPGGGV) form a disordered region.

The protein belongs to the universal ribosomal protein uL4 family. As to quaternary structure, part of the 50S ribosomal subunit.

It is found in the plastid. It localises to the chloroplast. Functionally, this protein binds directly and specifically to 23S rRNA. May play a role in plastid transcriptional regulation. This Arabidopsis thaliana (Mouse-ear cress) protein is Large ribosomal subunit protein uL4c (RPL4).